Consider the following 501-residue polypeptide: Glycine betaine/proline/ectoine/pipecolic acid transporter OusA (501 aa).

Residues 1-38 (MKLKRKRVKPIALDDVTIIDDGRLRKAITAAALGNAME) are Cytoplasmic-facing. A helical membrane pass occupies residues 39 to 59 (WFDFGVYGFVAYALGQVFFPG). Residues 60-66 (ADPGVQM) lie on the Periplasmic side of the membrane. A helical membrane pass occupies residues 67-87 (IAALATFSVPFLIRPLGGVFF). Over 88–98 (GALGDKYGRQK) the chain is Cytoplasmic. The helical transmembrane segment at 99 to 119 (ILAITIIIMSISTFCIGLIPS) threads the bilayer. Residues 120-122 (YER) lie on the Periplasmic side of the membrane. Residues 123 to 143 (IGIWAPILLLLAKMAQGFSVG) traverse the membrane as a helical segment. Residues 144–170 (GEYTGASIFVAEYSPDRKRGFMGSWLD) are Cytoplasmic-facing. The helical transmembrane segment at 171 to 191 (FGSIAGFVLGAGVVVLISTLI) threads the bilayer. Residues 192-195 (GEQA) lie on the Periplasmic side of the membrane. Residues 196–216 (FLAWGWRLPFFLALPLGLIGL) form a helical membrane-spanning segment. Residues 217-261 (YLRHALEETPAFRQHVEKLEQNDRDGLKAGPGVSFREIATHHWKS) lie on the Cytoplasmic side of the membrane. A helical transmembrane segment spans residues 262–282 (LLVCIGLVIATNVTYYMLLTY). Residues 283–298 (MPSYLSHSLHYSENHG) lie on the Periplasmic side of the membrane. A helical transmembrane segment spans residues 299-319 (VLIIIAIMIGMLFVQPVMGLL). Residues 320–326 (SDRFGRK) are Cytoplasmic-facing. The helical transmembrane segment at 327 to 347 (PFVVIGSVAMFFLAVPSFMLI) threads the bilayer. At 348–350 (NSD) the chain is on the periplasmic side. Residues 351-371 (IIGLIFLGLLMLAVILNAFTG) form a helical membrane-spanning segment. Residues 372–391 (VMASTLPALFPTHIRYSALA) lie on the Cytoplasmic side of the membrane. Residues 392-412 (SAFNISVLIAGLTPTVAAWLV) traverse the membrane as a helical segment. Topologically, residues 413–417 (ESSQN) are periplasmic. The helical transmembrane segment at 418-438 (LYMPAYYLMVIAVIGLLTGLF) threads the bilayer. Residues 439-501 (MKETANKPLK…LVAQHPRIND (63 aa)) are Cytoplasmic-facing. Residues 461-495 (KEILQEHHDNIEHKIEDITQQIAELEAKRQLLVAQ) adopt a coiled-coil conformation.

Belongs to the major facilitator superfamily. Sugar transporter (TC 2.A.1.1) family.

Its subcellular location is the cell inner membrane. Its function is as follows. Involved in uptake and accumulation of various osmoprotectants. Allows the uptake of glycine betaine, proline, ectoine, and pipecolic acid. May be a contributory factor in the infection progression within the host. The sequence is that of Glycine betaine/proline/ectoine/pipecolic acid transporter OusA from Dickeya dadantii (strain 3937) (Erwinia chrysanthemi (strain 3937)).